The primary structure comprises 496 residues: GTPase Der (496 aa).

2 consecutive EngA-type G domains span residues 3–166 (PVIA…VGKF) and 209–382 (VKLA…TCAT). GTP-binding positions include 9-16 (GRPNVGKS), 56-60 (DTGGI), 118-121 (NKTD), 215-222 (GRPNVGKS), 262-266 (DTAGV), and 327-330 (NKWD). The KH-like domain occupies 383–467 (RRVGTSMLTR…PIRIQFKEGE (85 aa)).

Belongs to the TRAFAC class TrmE-Era-EngA-EngB-Septin-like GTPase superfamily. EngA (Der) GTPase family. In terms of assembly, associates with the 50S ribosomal subunit.

GTPase that plays an essential role in the late steps of ribosome biogenesis. This chain is GTPase Der, found in Proteus mirabilis (strain HI4320).